The sequence spans 884 residues: Probable leucine--tRNA ligase, cytoplasmic (884 aa).

The 'HIGH' region signature appears at P40 to H50. Positions K566–S570 match the 'KMSKS' region motif. An ATP-binding site is contributed by K569.

Belongs to the class-I aminoacyl-tRNA synthetase family.

The protein localises to the cytoplasm. The enzyme catalyses tRNA(Leu) + L-leucine + ATP = L-leucyl-tRNA(Leu) + AMP + diphosphate. The protein is Probable leucine--tRNA ligase, cytoplasmic of Vairimorpha ceranae (strain BRL01) (Microsporidian parasite).